The following is a 404-amino-acid chain: Protein IQ-DOMAIN 12 (404 aa).

The calmodulin-binding stretch occupies residues F8–K25. A Nuclear localization signal 1 motif is present at residues M11–E18. 2 consecutive IQ domains span residues N108–R135 and L136–S158. A Nuclear localization signal 2 motif is present at residues I226 to K233.

The protein belongs to the IQD family. As to quaternary structure, binds to multiple calmodulin (CaM) in the presence of Ca(2+) and CaM-like proteins.

Its subcellular location is the nucleus. The protein resides in the cell membrane. Functionally, may be involved in cooperative interactions with calmodulins or calmodulin-like proteins. Recruits calmodulin proteins to microtubules, thus being a potential scaffold in cellular signaling and trafficking. May associate with nucleic acids and regulate gene expression at the transcriptional or post-transcriptional level. In Arabidopsis thaliana (Mouse-ear cress), this protein is Protein IQ-DOMAIN 12.